The chain runs to 174 residues: MAIVAVYPGTFDPLTNGHADLVQRSCRLFDRLIVAVAAYPSPSKRPAFTLDERLALAREVLKDMPGVEVEAFDTLLVDFVRARGATVILRGLRAVSDFEHEFQLASMNRQLIEEVETVFLTPAEQHAYISSSLVREVAALGGDVTRFVPPVVARALARRYSGPNRDGDGDGQGG.

Residue Thr-10 coordinates substrate. ATP contacts are provided by residues 10–11 (TF) and His-18. Substrate contacts are provided by Lys-44, Leu-76, and Arg-90. Residues 91 to 93 (GLR), Glu-101, and 126 to 132 (HAYISSS) contribute to the ATP site.

It belongs to the bacterial CoaD family. In terms of assembly, homohexamer. Mg(2+) serves as cofactor.

The protein localises to the cytoplasm. The catalysed reaction is (R)-4'-phosphopantetheine + ATP + H(+) = 3'-dephospho-CoA + diphosphate. It participates in cofactor biosynthesis; coenzyme A biosynthesis; CoA from (R)-pantothenate: step 4/5. In terms of biological role, reversibly transfers an adenylyl group from ATP to 4'-phosphopantetheine, yielding dephospho-CoA (dPCoA) and pyrophosphate. This chain is Phosphopantetheine adenylyltransferase, found in Alkalilimnicola ehrlichii (strain ATCC BAA-1101 / DSM 17681 / MLHE-1).